The sequence spans 197 residues: Small ribosomal subunit protein uS4 (197 aa).

An S4 RNA-binding domain is found at 88–150; the sequence is SRLDNLVYRM…AKSLEIILDN (63 aa).

The protein belongs to the universal ribosomal protein uS4 family. In terms of assembly, part of the 30S ribosomal subunit. Contacts protein S5. The interaction surface between S4 and S5 is involved in control of translational fidelity.

One of the primary rRNA binding proteins, it binds directly to 16S rRNA where it nucleates assembly of the body of the 30S subunit. In terms of biological role, with S5 and S12 plays an important role in translational accuracy. The protein is Small ribosomal subunit protein uS4 of Azobacteroides pseudotrichonymphae genomovar. CFP2.